The following is a 138-amino-acid chain: Nucleoside diphosphate kinase (138 aa).

ATP contacts are provided by Lys9, Phe57, Arg85, Thr91, Arg102, and Asn112. His115 acts as the Pros-phosphohistidine intermediate in catalysis.

The protein belongs to the NDK family. The cofactor is Mg(2+).

The protein localises to the cytoplasm. The catalysed reaction is a 2'-deoxyribonucleoside 5'-diphosphate + ATP = a 2'-deoxyribonucleoside 5'-triphosphate + ADP. The enzyme catalyses a ribonucleoside 5'-diphosphate + ATP = a ribonucleoside 5'-triphosphate + ADP. Its function is as follows. Major role in the synthesis of nucleoside triphosphates other than ATP. The ATP gamma phosphate is transferred to the NDP beta phosphate via a ping-pong mechanism, using a phosphorylated active-site intermediate. This chain is Nucleoside diphosphate kinase, found in Picrophilus torridus (strain ATCC 700027 / DSM 9790 / JCM 10055 / NBRC 100828 / KAW 2/3).